Here is a 242-residue protein sequence, read N- to C-terminus: Biosynthetic peptidoglycan transglycosylase (242 aa).

A helical transmembrane segment spans residues 19–39 (LMVVLAVFWAGGIALFSVAPV).

Belongs to the glycosyltransferase 51 family.

Its subcellular location is the cell inner membrane. The catalysed reaction is [GlcNAc-(1-&gt;4)-Mur2Ac(oyl-L-Ala-gamma-D-Glu-L-Lys-D-Ala-D-Ala)](n)-di-trans,octa-cis-undecaprenyl diphosphate + beta-D-GlcNAc-(1-&gt;4)-Mur2Ac(oyl-L-Ala-gamma-D-Glu-L-Lys-D-Ala-D-Ala)-di-trans,octa-cis-undecaprenyl diphosphate = [GlcNAc-(1-&gt;4)-Mur2Ac(oyl-L-Ala-gamma-D-Glu-L-Lys-D-Ala-D-Ala)](n+1)-di-trans,octa-cis-undecaprenyl diphosphate + di-trans,octa-cis-undecaprenyl diphosphate + H(+). Its pathway is cell wall biogenesis; peptidoglycan biosynthesis. Functionally, peptidoglycan polymerase that catalyzes glycan chain elongation from lipid-linked precursors. This chain is Biosynthetic peptidoglycan transglycosylase, found in Shigella boydii serotype 4 (strain Sb227).